A 133-amino-acid polypeptide reads, in one-letter code: Protein msa (133 aa).

4 consecutive transmembrane segments (helical) span residues 3-23, 27-47, 55-75, and 103-123; these read YLIL…AIGL, ILAA…ILFF, YIFF…VHLM, and FGFD…IVLY.

It is found in the cell membrane. Its function is as follows. Accessory element involved in the expression of sarA and several virulence factors. Modulates SarA production and/or function in a strain-dependent manner. Affects the transcription of the accessory gene regulator (agr) and genes encoding virulence factors including alpha toxin (hla) and protein A (spa). The protein is Protein msa (msa) of Staphylococcus aureus (strain USA300).